Consider the following 161-residue polypeptide: Large ribosomal subunit protein uL15 (161 aa).

The tract at residues 1–41 is disordered; sequence MTKLNELAPAPGSTKGRMRVGRGPGSGKGKTAGRGVKGQKA. The span at 22–36 shows a compositional bias: gly residues; sequence RGPGSGKGKTAGRGV.

It belongs to the universal ribosomal protein uL15 family. As to quaternary structure, part of the 50S ribosomal subunit.

In terms of biological role, binds to the 23S rRNA. This is Large ribosomal subunit protein uL15 from Caulobacter sp. (strain K31).